A 308-amino-acid polypeptide reads, in one-letter code: uncharacterized protein (308 aa).

Leu-50, Asp-90, Asn-117, Tyr-182, Lys-186, Ile-222, and Thr-224 together coordinate NADP(+). The active-site Proton acceptor is Tyr-182. Lys-186 serves as the catalytic Lowers pKa of active site Tyr.

Belongs to the short-chain dehydrogenases/reductases (SDR) family.

This is an uncharacterized protein from Saccharomyces cerevisiae (strain ATCC 204508 / S288c) (Baker's yeast).